Reading from the N-terminus, the 205-residue chain is H/ACA ribonucleoprotein complex subunit GAR1 (205 aa).

A compositionally biased stretch (gly residues) spans 1–23; it reads MSFRGGNRGGRGGFRGGFRGGRT. Positions 1–31 are disordered; the sequence is MSFRGGNRGGRGGFRGGFRGGRTGSARSFQQ. Arginine 4 is subject to Asymmetric dimethylarginine; by HMT1. The RGG-box 1 stretch occupies residues 4 to 21; the sequence is RGGNRGGRGGFRGGFRGG. Asymmetric dimethylarginine; by HMT1; alternate is present on arginine 8. Position 8 is an omega-N-methylarginine; by HMT1; alternate (arginine 8). Arginine 11 carries the post-translational modification Asymmetric dimethylarginine; by HMT1. At arginine 15 the chain carries Asymmetric dimethylarginine; by HMT1; alternate. Arginine 15 carries the post-translational modification Omega-N-methylarginine; by HMT1; alternate. Arginine 19 is subject to Asymmetric dimethylarginine; by HMT1. A Glycyl lysine isopeptide (Lys-Gly) (interchain with G-Cter in ubiquitin) cross-link involves residue lysine 77. Residues 124 to 205 are disordered; it reads PKPKVVGPPK…SRGGFRGGRR (82 aa). Gly residues predominate over residues 143–205; sequence APGGRGGASM…SRGGFRGGRR (63 aa). 3 positions are modified to asymmetric dimethylarginine; by HMT1; alternate: arginine 147, arginine 154, and arginine 158. 3 positions are modified to omega-N-methylarginine; by HMT1; alternate: arginine 147, arginine 154, and arginine 158. Residues 147–205 are RGG-box 2; sequence RGGASMGRGGSRGGFRGGRGGSSFRGGRGGSSFRGGSRGGSFRGGSRGGSRGGFRGGRR. Arginine 162 carries the asymmetric dimethylarginine; by HMT1 modification. Arginine 165 is modified (asymmetric dimethylarginine; by HMT1; alternate). Arginine 165 carries the post-translational modification Omega-N-methylarginine; by HMT1; alternate. Arginine 171 and arginine 174 each carry asymmetric dimethylarginine; by HMT1. Omega-N-methylarginine; by HMT1 is present on residues arginine 180 and arginine 184. Arginine 189 is subject to Asymmetric dimethylarginine; by HMT1; alternate. Arginine 189 bears the Omega-N-methylarginine; by HMT1; alternate mark. An asymmetric dimethylarginine; by HMT1 mark is found at arginine 193, arginine 197, and arginine 201.

This sequence belongs to the GAR1 family. As to quaternary structure, component of the small nucleolar ribonucleoprotein particles containing H/ACA-type snoRNAs (H/ACA snoRNPs). The protein component of the H/ACA snoRNP contains CBF5, GAR1, NHP2 and NOP10. The complex contains a stable core composed of CBF5 and NOP10, to which GAR1 and NHP2 subsequently bind. Interacts with snoRNAs. In terms of processing, methylated by HMT1, forming asymmetric dimethylarginines (DMA) within a domain referred to as an RGG box, made up of repeated Gly-Gly dipeptides interspersed with Arg and aromatic residues.

The protein localises to the nucleus. It localises to the nucleolus. Functionally, non-catalytic component of the H/ACA small nucleolar ribonucleoprotein (H/ACA snoRNP), which catalyzes pseudouridylation of rRNA and is required for ribosome biogenesis. This involves the isomerization of uridine such that the ribose is subsequently attached to C5, instead of the normal N1. Pseudouridine ('psi') residues may serve to stabilize the conformation of rRNAs. The H/ACA snoRNP complex also mediates pseudouridylation of other types of RNAs. The H/ACA snoRNP complex mediates pseudouridylation at position 93 in U2 snRNA. Essential for growth. This chain is H/ACA ribonucleoprotein complex subunit GAR1, found in Saccharomyces cerevisiae (strain ATCC 204508 / S288c) (Baker's yeast).